The sequence spans 154 residues: Ascorbate-specific PTS system EIIA component (154 aa).

In terms of domain architecture, PTS EIIA type-2 spans 6–150 (SLAENKSIRL…QEVLDLIDRT (145 aa)). Catalysis depends on His-68, which acts as the Tele-phosphohistidine intermediate. His-68 is subject to Phosphohistidine.

It is found in the cytoplasm. Functionally, the phosphoenolpyruvate-dependent sugar phosphotransferase system (sugar PTS), a major carbohydrate active transport system, catalyzes the phosphorylation of incoming sugar substrates concomitantly with their translocation across the cell membrane. The enzyme II UlaABC PTS system is involved in ascorbate transport. The polypeptide is Ascorbate-specific PTS system EIIA component (ulaC) (Shigella boydii serotype 4 (strain Sb227)).